Here is a 137-residue protein sequence, read N- to C-terminus: Small ribosomal subunit protein bS6 (137 aa).

It belongs to the bacterial ribosomal protein bS6 family.

In terms of biological role, binds together with bS18 to 16S ribosomal RNA. This Sulfurimonas denitrificans (strain ATCC 33889 / DSM 1251) (Thiomicrospira denitrificans (strain ATCC 33889 / DSM 1251)) protein is Small ribosomal subunit protein bS6.